A 448-amino-acid polypeptide reads, in one-letter code: Probable 3-ketoacyl-CoA thiolase (448 aa).

The active-site Acyl-thioester intermediate is cysteine 110. Active-site proton acceptor residues include histidine 402 and cysteine 432.

Belongs to the thiolase-like superfamily. Thiolase family.

Its subcellular location is the mitochondrion. The enzyme catalyses an acyl-CoA + acetyl-CoA = a 3-oxoacyl-CoA + CoA. Its pathway is lipid metabolism; fatty acid beta-oxidation. Functionally, mitochondrial enzyme that catalyzes reactions of the mitochondrial beta-oxidation pathway. The protein is Probable 3-ketoacyl-CoA thiolase of Caenorhabditis elegans.